A 291-amino-acid polypeptide reads, in one-letter code: Putative heme-binding peroxidase (291 aa).

His-61 acts as the Proton acceptor in catalysis. Heme b is bound at residue His-185. The active-site Tryptophan radical intermediate is the Trp-201.

It belongs to the peroxidase family. Cytochrome c peroxidase subfamily. Heme b serves as cofactor.

Destroys radicals which are normally produced within the cells and which are toxic to biological systems. This is Putative heme-binding peroxidase (CCP2) from Candida albicans (strain SC5314 / ATCC MYA-2876) (Yeast).